The primary structure comprises 723 residues: Heme/hemopexin utilization protein C (723 aa).

The first 21 residues, 1–21, serve as a signal peptide directing secretion; the sequence is MRFSKLSLAITTTLVTANALA. A TBDR plug domain is found at 36–147; it reads DPSRFAYTPE…LGGVVAMRTP (112 aa). The 566-residue stretch at 158-723 folds into the TBDR beta-barrel domain; that stretch reads KFGVKIRQGY…NAKISAVYSF (566 aa). The TonB C-terminal box motif lies at 706-723; the sequence is SLMEGTGRNAKISAVYSF.

Belongs to the TonB-dependent receptor family.

The protein resides in the cell outer membrane. Functionally, required for utilization of free heme at low concentrations. In Haemophilus influenzae (strain ATCC 51907 / DSM 11121 / KW20 / Rd), this protein is Heme/hemopexin utilization protein C (hxuC).